The following is a 528-amino-acid chain: Na(+)/H(+) antiporter NhaB (528 aa).

11 helical membrane-spanning segments follow: residues 29–49 (LIINPIVFYINPFVAGWLLVI), 52–72 (IFTLAMALKCYPLQPGGLLAI), 95–115 (VLLLLVFMVAGIYFMKQLLLF), 139–159 (AFLSAFLDALTVIAVIIAVAV), 203–223 (LLMHAGVGTALGGVCTMVGEP), 248–268 (VPVFFAGIFTCFLVEKFKIFG), 304–324 (AFIGIWLIVGLALHLASVGLI), 349–369 (EEALPFTALLAVFFAVVAVII), 390–410 (LVIFYIANGLLSMVSDNVFVG), 448–468 (ATPNGQAAFLFLLTSAIAPLI), and 476–496 (VWMALPYTIVLSIVGVLAIEL).

Belongs to the NhaB Na(+)/H(+) (TC 2.A.34) antiporter family.

It is found in the cell inner membrane. The catalysed reaction is 2 Na(+)(in) + 3 H(+)(out) = 2 Na(+)(out) + 3 H(+)(in). In terms of biological role, na(+)/H(+) antiporter that extrudes sodium in exchange for external protons. This chain is Na(+)/H(+) antiporter NhaB, found in Shewanella woodyi (strain ATCC 51908 / MS32).